Here is a 413-residue protein sequence, read N- to C-terminus: Arogenate dehydratase/prephenate dehydratase 6, chloroplastic (413 aa).

The N-terminal 44 residues, 1–44 (MKALSSSSPILGASQPATATALIARSGRSEWQSSCAILTSKVIS), are a transit peptide targeting the chloroplast. A Prephenate dehydratase domain is found at 117–294 (RVAYQGVPGA…NVTRFVMLAR (178 aa)). An ACT domain is found at 308-399 (SIVFAHEKGT…SFLRVLGSYP (92 aa)).

In terms of tissue distribution, expressed in roots, leaves, stems, flowers and siliques.

The protein resides in the plastid. It localises to the chloroplast stroma. It catalyses the reaction L-arogenate + H(+) = L-phenylalanine + CO2 + H2O. The enzyme catalyses prephenate + H(+) = 3-phenylpyruvate + CO2 + H2O. Its pathway is amino-acid biosynthesis; L-phenylalanine biosynthesis; L-phenylalanine from L-arogenate: step 1/1. It functions in the pathway amino-acid biosynthesis; L-phenylalanine biosynthesis; phenylpyruvate from prephenate: step 1/1. Functionally, converts the prephenate produced from the shikimate-chorismate pathway into phenylalanine. Dehydratase that uses arogenate and prephenate as substrates. Utilzes more efficiently arogenate than prephenate. The protein is Arogenate dehydratase/prephenate dehydratase 6, chloroplastic of Arabidopsis thaliana (Mouse-ear cress).